Consider the following 215-residue polypeptide: TLD domain-containing protein 2 (215 aa).

Positions Met1–Val46 are disordered. Positions Leu19 to Ala34 are enriched in acidic residues. The TLDc domain maps to Gln54–Ser215.

This sequence belongs to the OXR1 family.

This is TLD domain-containing protein 2 (TLDC2) from Homo sapiens (Human).